Reading from the N-terminus, the 246-residue chain is Probable maleylacetoacetate isomerase 1 (246 aa).

The GST N-terminal domain occupies 32 to 116 (TKPILYSYWP…YLEETRPQPA (85 aa)). Glutathione contacts are provided by residues 42–47 (SSCSWR), Val-88, 100–101 (DS), Gln-140, and 144–146 (NVS). In terms of domain architecture, GST C-terminal spans 121–241 (DPVKRAKIRE…HPSTQPDCPP (121 aa)).

Belongs to the GST superfamily. Zeta family. The cofactor is glutathione.

Its subcellular location is the cytoplasm. The catalysed reaction is 4-maleylacetoacetate = 4-fumarylacetoacetate. It catalyses the reaction RX + glutathione = an S-substituted glutathione + a halide anion + H(+). It functions in the pathway amino-acid degradation; L-phenylalanine degradation; acetoacetate and fumarate from L-phenylalanine: step 5/6. Catalyzes the glutathione dependent oxygenation of dichloroacetic acid to glyoxylic acid in vitro. Possesses low glutathione thioltransferase activity toward 4-hydroxynonenal (4-HNE). Has no glutathione thioltransferase activity with adrenochrome, phenethyl isothiocyanate (PEITC), 5-hydroperoxyeicosatetraenoic acid ((5S)-HpETE), prostaglandin A2 (PGA2) or 2-hydroxyethyldisulfide (HED). This Drosophila melanogaster (Fruit fly) protein is Probable maleylacetoacetate isomerase 1 (GstZ1).